The sequence spans 163 residues: RNA pyrophosphohydrolase (163 aa).

The Nudix hydrolase domain maps to 6 to 149; that stretch reads GYRLNVGIVI…KRDVYRQVMK (144 aa). The Nudix box signature appears at 38–59; that stretch reads GGIHLTESPEEAMYRELFEELG.

This sequence belongs to the Nudix hydrolase family. RppH subfamily. A divalent metal cation is required as a cofactor.

Its function is as follows. Accelerates the degradation of transcripts by removing pyrophosphate from the 5'-end of triphosphorylated RNA, leading to a more labile monophosphorylated state that can stimulate subsequent ribonuclease cleavage. In Hamiltonella defensa subsp. Acyrthosiphon pisum (strain 5AT), this protein is RNA pyrophosphohydrolase.